A 420-amino-acid chain; its full sequence is Pectate lyase (420 aa).

The first 21 residues, 1 to 21, serve as a signal peptide directing secretion; sequence MKKVMLATALFLGLTPAGANA. Residues 117-139 are disordered; sequence TWGKKEPSGTQEEARARSQKNQK. Basic and acidic residues predominate over residues 119–132; sequence GKKEPSGTQEEARA. 3 residues coordinate Ca(2+): aspartate 205, aspartate 244, and aspartate 248. Arginine 300 is an active-site residue.

This sequence belongs to the polysaccharide lyase 1 family. Monomer. Requires Ca(2+) as cofactor.

It localises to the secreted. The enzyme catalyses Eliminative cleavage of (1-&gt;4)-alpha-D-galacturonan to give oligosaccharides with 4-deoxy-alpha-D-galact-4-enuronosyl groups at their non-reducing ends.. It functions in the pathway glycan metabolism; pectin degradation; 2-dehydro-3-deoxy-D-gluconate from pectin: step 2/5. Produces unsaturated products from polygalacturonate. In Bacillus subtilis (strain 168), this protein is Pectate lyase (pel).